We begin with the raw amino-acid sequence, 120 residues long: MVKLTSIAAGVAAIAATASATTTLAQSDERVNLVELGVYVSDIRAHLAQYYSFQAAHPTETYPIEVAEAVFNYGDFTTMLTGIAPDQVTRMITGVPWYSSRLKPAISSALSKDGIYTIAN.

Residues Ile-7–Leu-24 traverse the membrane as a helical segment.

Belongs to the SRP1/TIP1 family. Seripauperin subfamily.

It is found in the membrane. In Saccharomyces cerevisiae (strain ATCC 204508 / S288c) (Baker's yeast), this protein is Seripauperin-2 (PAU2).